The primary structure comprises 310 residues: Zinc finger protein 346 (310 aa).

N-acetylmethionine is present on Met-1. Over residues 1 to 12 (MEYPAPAAVQAA) the composition is skewed to low complexity. The segment at 1-33 (MEYPAPAAVQAADGGGAGPYNSSELLEGQEPDG) is disordered. The segment at 70 to 104 (FTNTQCKVCCALLISESQKLAHYQSKKHANKVKRY) adopts a Matrin-type 1 zinc-finger fold. Zn(2+)-binding residues include Cys-75, Cys-78, His-91, and His-97. Residue Lys-114 forms a Glycyl lysine isopeptide (Lys-Gly) (interchain with G-Cter in SUMO2) linkage. Residues 131–165 (DKNQCCPICNMTFSSPVVAQSHYLGKTHAKNLKLK) form a Matrin-type 2 zinc finger. Zn(2+) contacts are provided by Cys-136, Cys-139, His-152, and His-158. Lys-170 is covalently cross-linked (Glycyl lysine isopeptide (Lys-Gly) (interchain with G-Cter in SUMO2)). Matrin-type zinc fingers lie at residues 198 to 232 (DPDK…ETKL) and 252 to 286 (GKGY…SPKT). The tract at residues 278 to 310 (KHKNQSPKTVASSLGQIPMQRQPIQKDSTTLED) is disordered. Composition is skewed to polar residues over residues 283–292 (SPKTVASSLG) and 299–310 (QPIQKDSTTLED).

In terms of assembly, forms a heteromeric complex with XPO5 and ILF3. Found in a nuclear export complex with XPO5, RAN, ILF3, ZNF346 and double-stranded RNA. Interacts with XPO5. Interacts with ILF3 in an RNA-independent manner.

It localises to the nucleus. Its subcellular location is the nucleolus. The protein localises to the cytoplasm. Binds with low affinity to dsDNA and ssRNA, and with high affinity to dsRNA, with no detectable sequence specificity. This Pongo abelii (Sumatran orangutan) protein is Zinc finger protein 346 (ZNF346).